We begin with the raw amino-acid sequence, 115 residues long: Phosphoribosyl-AMP cyclohydrolase (115 aa).

Aspartate 80 is a Mg(2+) binding site. Position 81 (cysteine 81) interacts with Zn(2+). The Mg(2+) site is built by aspartate 82 and aspartate 84. 2 residues coordinate Zn(2+): cysteine 97 and cysteine 104.

The protein belongs to the PRA-CH family. Homodimer. Mg(2+) serves as cofactor. Zn(2+) is required as a cofactor.

Its subcellular location is the cytoplasm. The enzyme catalyses 1-(5-phospho-beta-D-ribosyl)-5'-AMP + H2O = 1-(5-phospho-beta-D-ribosyl)-5-[(5-phospho-beta-D-ribosylamino)methylideneamino]imidazole-4-carboxamide. It functions in the pathway amino-acid biosynthesis; L-histidine biosynthesis; L-histidine from 5-phospho-alpha-D-ribose 1-diphosphate: step 3/9. Functionally, catalyzes the hydrolysis of the adenine ring of phosphoribosyl-AMP. This chain is Phosphoribosyl-AMP cyclohydrolase, found in Mycolicibacterium smegmatis (strain ATCC 700084 / mc(2)155) (Mycobacterium smegmatis).